We begin with the raw amino-acid sequence, 94 residues long: Large ribosomal subunit protein bL27 (94 aa).

Positions 1-9 (MNLANLQLF) are excised as a propeptide. Positions 11 to 33 (HKKGGGSTSNGRDSQAKRLGAKA) are disordered.

It belongs to the bacterial ribosomal protein bL27 family. Post-translationally, the N-terminus is cleaved by ribosomal processing cysteine protease Prp.

The polypeptide is Large ribosomal subunit protein bL27 (Streptococcus agalactiae serotype V (strain ATCC BAA-611 / 2603 V/R)).